A 344-amino-acid chain; its full sequence is MGLISYFASFLPDVPWHFWGSVDSLLQGLVGACAVSVLYNLMKVHLYIVCLNDPDKQKEAAQLRAQSPIMDFLHLSLLSLLFSLLGPRVGALVVLEFSLRAVSMVLSANKGAQSSQLFLLCQFSLGCGVSCSLDYLHEGAPHRTWNLLLAVGLSGLILWQSRRMCRHVGILYQLHSGERYCGVCLSLLACWRDIPPFLWRALKVAFWVSDLAAVAVINRDFLSTSEAMRFWTPLTICYTLLVIYMQEEQHQNPSEQMAYQTVFVRMGGLLILMMTVGRWADILHIFISLTGELWCLLHAGVMLRLCREQDFAERMSNPRKYPVSRAPKSTREGRTLQRETSLEE.

A run of 8 helical transmembrane segments spans residues 29–49, 75–95, 117–137, 139–159, 197–217, 230–246, 257–277, and 282–302; these read LVGA…LYIV, LSLL…LVVL, LFLL…DYLH, GAPH…LILW, FLWR…VAVI, FWTP…IYMQ, MAYQ…MTVG, and ILHI…AGVM. The tract at residues 317-344 is disordered; it reads NPRKYPVSRAPKSTREGRTLQRETSLEE. The segment covering 329-344 has biased composition (basic and acidic residues); that stretch reads STREGRTLQRETSLEE.

This sequence belongs to the TMEM82 family.

It is found in the membrane. In Xenopus tropicalis (Western clawed frog), this protein is Transmembrane protein 82 (tmem82).